A 299-amino-acid polypeptide reads, in one-letter code: MDLLWILPSLWLLLLGGPACLKTQEHPSCPGPRELEASKVVLLPSCPGAPGSPGEKGAPGPQGPPGPPGKMGPKGEPGDPVNLLRCQEGPRNCRELLSQGATLSGWYHLCLPEGRALPVFCDMDTEGGGWLVFQRRQDGSVDFFRSWSSYRAGFGNQESEFWLGNENLHQLTLQGNWELRVELEDFNGNRTFAHYATFRLLGEVDHYQLALGKFSEGTAGDSLSLHSGRPFTTYDADHDSSNSNCAVIVHGAWWYASCYRSNLNGRYAVSEAAAHKYGIDWASGRGVGHPYRRVRMMLR.

The first 23 residues, 1–23 (MDLLWILPSLWLLLLGGPACLKT), serve as a signal peptide directing secretion. The disordered stretch occupies residues 44–81 (PSCPGAPGSPGEKGAPGPQGPPGPPGKMGPKGEPGDPV). The 33-residue stretch at 48 to 80 (GAPGSPGEKGAPGPQGPPGPPGKMGPKGEPGDP) folds into the Collagen-like domain. 6 positions are modified to hydroxyproline: proline 50, proline 53, proline 59, proline 65, proline 68, and proline 77. Residues 61–70 (PQGPPGPPGK) show a composition bias toward pro residues. In terms of domain architecture, Fibrinogen C-terminal spans 84-299 (LRCQEGPRNC…PYRRVRMMLR (216 aa)). Disulfide bonds link cysteine 86-cysteine 110 and cysteine 93-cysteine 121. N-linked (GlcNAc...) (complex) asparagine glycosylation is present at asparagine 189. Ca(2+)-binding residues include aspartate 237, aspartate 239, serine 241, and serine 243. Residues cysteine 245 and cysteine 258 are joined by a disulfide bond. 258–259 (CY) is an a carbohydrate binding site.

The protein belongs to the ficolin lectin family. Homotrimer. May form an octadecamer consisting of an elementary trimer unit. Does not interact with fibronectin, elastin or zymosan. Interacts with MASP1 and MASP2. Post-translationally, the N-terminus is blocked. In terms of tissue distribution, liver and lung. In liver it is produced by bile duct epithelial cells and hepatocytes. In lung it is produced by both ciliated bronchial epithelial cells and type II alveolar epithelial cells.

It is found in the secreted. In terms of biological role, may function in innate immunity through activation of the lectin complement pathway. Calcium-dependent and GlcNAc-binding lectin. Has affinity with GalNAc, GlcNAc, D-fucose, as mono/oligosaccharide and lipopolysaccharides from S.typhimurium and S.minnesota. In Homo sapiens (Human), this protein is Ficolin-3 (FCN3).